The following is a 647-amino-acid chain: 1-deoxy-D-xylulose-5-phosphate synthase (647 aa).

Thiamine diphosphate contacts are provided by residues His79 and 120-122; that span reads GHA. Asp152 lines the Mg(2+) pocket. Residues 153–154, Asn181, Phe293, and Glu377 contribute to the thiamine diphosphate site; that span reads GS. Residue Asn181 participates in Mg(2+) binding.

This sequence belongs to the transketolase family. DXPS subfamily. Homodimer. The cofactor is Mg(2+). It depends on thiamine diphosphate as a cofactor.

The enzyme catalyses D-glyceraldehyde 3-phosphate + pyruvate + H(+) = 1-deoxy-D-xylulose 5-phosphate + CO2. Its pathway is metabolic intermediate biosynthesis; 1-deoxy-D-xylulose 5-phosphate biosynthesis; 1-deoxy-D-xylulose 5-phosphate from D-glyceraldehyde 3-phosphate and pyruvate: step 1/1. Its function is as follows. Catalyzes the acyloin condensation reaction between C atoms 2 and 3 of pyruvate and glyceraldehyde 3-phosphate to yield 1-deoxy-D-xylulose-5-phosphate (DXP). This Bacteroides thetaiotaomicron (strain ATCC 29148 / DSM 2079 / JCM 5827 / CCUG 10774 / NCTC 10582 / VPI-5482 / E50) protein is 1-deoxy-D-xylulose-5-phosphate synthase.